The primary structure comprises 97 residues: Integration host factor subunit alpha (97 aa).

Residues 49-71 (FGNFDLRDKNQRPGRNPKTGEDI) form a disordered region.

The protein belongs to the bacterial histone-like protein family. Heterodimer of an alpha and a beta chain.

In terms of biological role, this protein is one of the two subunits of integration host factor, a specific DNA-binding protein that functions in genetic recombination as well as in transcriptional and translational control. This is Integration host factor subunit alpha from Shewanella woodyi (strain ATCC 51908 / MS32).